Reading from the N-terminus, the 212-residue chain is ATP synthase F(0) complex subunit a (212 aa).

Helical transmembrane passes span Met3–Ser23, Trp58–Leu78, Gln87–Leu107, Ile128–Val148, Phe169–Leu189, and Leu192–Leu212.

The protein belongs to the ATPase A chain family. As to quaternary structure, component of the ATP synthase complex composed at least of ATP5F1A/subunit alpha, ATP5F1B/subunit beta, ATP5MC1/subunit c (homooctomer), MT-ATP6/subunit a, MT-ATP8/subunit 8, ATP5ME/subunit e, ATP5MF/subunit f, ATP5MG/subunit g, ATP5MK/subunit k, ATP5MJ/subunit j, ATP5F1C/subunit gamma, ATP5F1D/subunit delta, ATP5F1E/subunit epsilon, ATP5PF/subunit F6, ATP5PB/subunit b, ATP5PD/subunit d, ATP5PO/subunit OSCP. ATP synthase complex consists of a soluble F(1) head domain (subunits alpha(3) and beta(3)) - the catalytic core - and a membrane F(0) domain - the membrane proton channel (subunits c, a, 8, e, f, g, k and j). These two domains are linked by a central stalk (subunits gamma, delta, and epsilon) rotating inside the F1 region and a stationary peripheral stalk (subunits F6, b, d, and OSCP). Interacts with DNAJC30; interaction is direct.

It is found in the mitochondrion inner membrane. It carries out the reaction H(+)(in) = H(+)(out). Functionally, subunit a, of the mitochondrial membrane ATP synthase complex (F(1)F(0) ATP synthase or Complex V) that produces ATP from ADP in the presence of a proton gradient across the membrane which is generated by electron transport complexes of the respiratory chain. ATP synthase complex consist of a soluble F(1) head domain - the catalytic core - and a membrane F(1) domain - the membrane proton channel. These two domains are linked by a central stalk rotating inside the F(1) region and a stationary peripheral stalk. During catalysis, ATP synthesis in the catalytic domain of F(1) is coupled via a rotary mechanism of the central stalk subunits to proton translocation. With the subunit c (ATP5MC1), forms the proton-conducting channel in the F(0) domain, that contains two crucial half-channels (inlet and outlet) that facilitate proton movement from the mitochondrial intermembrane space (IMS) into the matrix. Protons are taken up via the inlet half-channel and released through the outlet half-channel, following a Grotthuss mechanism. The sequence is that of ATP synthase F(0) complex subunit a from Tropidurus hispidus (Peters' lava lizard).